The following is a 147-amino-acid chain: Endoribonuclease YbeY (147 aa).

The Zn(2+) site is built by histidine 107, histidine 111, and histidine 117.

It belongs to the endoribonuclease YbeY family. Zn(2+) is required as a cofactor.

The protein localises to the cytoplasm. Its function is as follows. Single strand-specific metallo-endoribonuclease involved in late-stage 70S ribosome quality control and in maturation of the 3' terminus of the 16S rRNA. The polypeptide is Endoribonuclease YbeY (Solibacter usitatus (strain Ellin6076)).